The sequence spans 532 residues: CTP synthase (532 aa).

The tract at residues 1–267 (MTKYIFVTGG…DDIVLEHLQL (267 aa)) is amidoligase domain. Serine 13 provides a ligand contact to CTP. Serine 13 is a UTP binding site. 14-19 (SIGKGI) serves as a coordination point for ATP. Tyrosine 54 contributes to the L-glutamine binding site. Aspartate 71 is a binding site for ATP. Positions 71 and 141 each coordinate Mg(2+). CTP is bound by residues 148–150 (DIE), 188–193 (KTKPTQ), and lysine 224. UTP contacts are provided by residues 188-193 (KTKPTQ) and lysine 224. The Glutamine amidotransferase type-1 domain occupies 292-532 (RIGLVGKYVS…DFVGAALKNK (241 aa)). L-glutamine is bound at residue glycine 354. The active-site Nucleophile; for glutamine hydrolysis is the cysteine 381. L-glutamine is bound by residues 382-385 (LGMQ), glutamate 405, and arginine 462. Active-site residues include histidine 507 and glutamate 509.

Belongs to the CTP synthase family. As to quaternary structure, homotetramer.

It carries out the reaction UTP + L-glutamine + ATP + H2O = CTP + L-glutamate + ADP + phosphate + 2 H(+). It catalyses the reaction L-glutamine + H2O = L-glutamate + NH4(+). The catalysed reaction is UTP + NH4(+) + ATP = CTP + ADP + phosphate + 2 H(+). The protein operates within pyrimidine metabolism; CTP biosynthesis via de novo pathway; CTP from UDP: step 2/2. With respect to regulation, allosterically activated by GTP, when glutamine is the substrate; GTP has no effect on the reaction when ammonia is the substrate. The allosteric effector GTP functions by stabilizing the protein conformation that binds the tetrahedral intermediate(s) formed during glutamine hydrolysis. Inhibited by the product CTP, via allosteric rather than competitive inhibition. Catalyzes the ATP-dependent amination of UTP to CTP with either L-glutamine or ammonia as the source of nitrogen. Regulates intracellular CTP levels through interactions with the four ribonucleotide triphosphates. The protein is CTP synthase of Listeria monocytogenes serovar 1/2a (strain ATCC BAA-679 / EGD-e).